Here is a 155-residue protein sequence, read N- to C-terminus: Cytochrome c-550 (155 aa).

Residues 1–20 (MKISIYATLAAITLALPAAA) form the signal peptide. Pyrrolidone carboxylic acid is present on Gln21. 4 residues coordinate heme c: Cys35, Cys38, His39, and Met120. A propeptide spanning residues 150–155 (AEGESN) is cleaved from the precursor.

In terms of processing, binds 1 heme c group covalently per subunit.

The chain is Cytochrome c-550 (cycA) from Paracoccus denitrificans.